Consider the following 94-residue polypeptide: Large ribosomal subunit protein bL25 (94 aa).

It belongs to the bacterial ribosomal protein bL25 family. Part of the 50S ribosomal subunit; part of the 5S rRNA/L5/L18/L25 subcomplex. Contacts the 5S rRNA. Binds to the 5S rRNA independently of L5 and L18.

Its function is as follows. This is one of the proteins that binds to the 5S RNA in the ribosome where it forms part of the central protuberance. This chain is Large ribosomal subunit protein bL25, found in Shigella boydii serotype 18 (strain CDC 3083-94 / BS512).